We begin with the raw amino-acid sequence, 267 residues long: GTP cyclohydrolase FolE2 (267 aa).

Belongs to the GTP cyclohydrolase IV family.

The enzyme catalyses GTP + H2O = 7,8-dihydroneopterin 3'-triphosphate + formate + H(+). It functions in the pathway cofactor biosynthesis; 7,8-dihydroneopterin triphosphate biosynthesis; 7,8-dihydroneopterin triphosphate from GTP: step 1/1. Functionally, converts GTP to 7,8-dihydroneopterin triphosphate. The protein is GTP cyclohydrolase FolE2 of Citrifermentans bemidjiense (strain ATCC BAA-1014 / DSM 16622 / JCM 12645 / Bem) (Geobacter bemidjiensis).